The sequence spans 1404 residues: DNA-directed RNA polymerase subunit beta' (1404 aa).

Zn(2+)-binding residues include Cys-72, Cys-74, Cys-87, and Cys-90. Mg(2+)-binding residues include Asp-463, Asp-465, and Asp-467. Positions 811, 885, 892, and 895 each coordinate Zn(2+).

The protein belongs to the RNA polymerase beta' chain family. As to quaternary structure, the RNAP catalytic core consists of 2 alpha, 1 beta, 1 beta' and 1 omega subunit. When a sigma factor is associated with the core the holoenzyme is formed, which can initiate transcription. Requires Mg(2+) as cofactor. The cofactor is Zn(2+).

The catalysed reaction is RNA(n) + a ribonucleoside 5'-triphosphate = RNA(n+1) + diphosphate. DNA-dependent RNA polymerase catalyzes the transcription of DNA into RNA using the four ribonucleoside triphosphates as substrates. The protein is DNA-directed RNA polymerase subunit beta' of Jannaschia sp. (strain CCS1).